The chain runs to 543 residues: Keratin, type II cytoskeletal 75 (543 aa).

Polar residues predominate over residues 1-16; sequence MSRQSTITFQTSSRRG. Residues 1–48 are disordered; that stretch reads MSRQSTITFQTSSRRGFSTASATTPATSRSRFSSASVTHSPAGSGGLG. The interval 1–144 is head; it reads MSRQSTITFQ…DPNIQRVRKE (144 aa). A compositionally biased stretch (low complexity) spans 17 to 36; that stretch reads FSTASATTPATSRSRFSSAS. The interval 145–180 is coil 1A; it reads EREQIKTLNNKFASFIDKVRFLEQQNKVLETKWSLL. In terms of domain architecture, IF rod spans 145–458; it reads EREQIKTLNN…KLLEGEECRL (314 aa). Residues 181 to 199 are linker 1; sequence QEQGTRTVRQSLEPFFEAY. Residues 200–292 form a coil 1B region; it reads ITDLRRQLDS…LFEAELCQMQ (93 aa). A linker 12 region spans residues 293–315; the sequence is TRVSDTSVVLSMDNNRSLDLDSI. The tract at residues 316–454 is coil 2; sequence IAEVKAQYEE…ATYRKLLEGE (139 aa). Residues 455–543 are tail; that stretch reads ECRLSGEGVS…TSSSRKSYKH (89 aa). The disordered stretch occupies residues 511–543; it reads SSFSNSSSRGLGGSGSSFKFVSTTSSSRKSYKH. Over residues 526–543 the composition is skewed to low complexity; it reads SSFKFVSTTSSSRKSYKH.

Belongs to the intermediate filament family. Heterodimer of a type I and a type II keratin. May associate with KRT17.

Plays a central role in hair and nail formation. Essential component of keratin intermediate filaments in the companion layer of the hair follicle. In Bos taurus (Bovine), this protein is Keratin, type II cytoskeletal 75 (KRT75).